The chain runs to 425 residues: Histidine--tRNA ligase (425 aa).

It belongs to the class-II aminoacyl-tRNA synthetase family. As to quaternary structure, homodimer.

The protein localises to the cytoplasm. The enzyme catalyses tRNA(His) + L-histidine + ATP = L-histidyl-tRNA(His) + AMP + diphosphate + H(+). The protein is Histidine--tRNA ligase of Aeromonas hydrophila subsp. hydrophila (strain ATCC 7966 / DSM 30187 / BCRC 13018 / CCUG 14551 / JCM 1027 / KCTC 2358 / NCIMB 9240 / NCTC 8049).